The sequence spans 506 residues: Heat stress transcription factor A-1 (506 aa).

Residues 157-207 are a coiled coil; it reads MEEEIEMLKRDKNVLMQELVRLRQQQQTTDHQLQTLGKRLQGMEQRQQQMM. A hydrophobic repeat HR-A/B region spans residues 164 to 214; sequence LKRDKNVLMQELVRLRQQQQTTDHQLQTLGKRLQGMEQRQQQMMSFLAKAM. The disordered stretch occupies residues 231–254; it reads RRRIVASNKKRRLPKQDGSLDSES. Positions 232–243 are enriched in basic residues; the sequence is RRIVASNKKRRL. The short motif at 239-242 is the Nuclear localization signal element; it reads KKRR. The AHA motif lies at 449-456; sequence DSFWEQFL.

It belongs to the HSF family. Class A subfamily. Homotrimer. Post-translationally, exhibits temperature-dependent phosphorylation.

The protein localises to the nucleus. Transcriptional regulator that specifically binds DNA of heat shock promoter elements (HSE). This is Heat stress transcription factor A-1 (HSFA1) from Oryza sativa subsp. japonica (Rice).